We begin with the raw amino-acid sequence, 224 residues long: Orotate phosphoribosyltransferase (224 aa).

Residues Lys26, 73–74 (YK), Arg100, Lys101, Lys104, His106, and 127–135 (EDVTTSGKS) contribute to the 5-phospho-alpha-D-ribose 1-diphosphate site. 2 residues coordinate orotate: Thr131 and Arg160.

This sequence belongs to the purine/pyrimidine phosphoribosyltransferase family. PyrE subfamily. In terms of assembly, homodimer. The cofactor is Mg(2+).

It catalyses the reaction orotidine 5'-phosphate + diphosphate = orotate + 5-phospho-alpha-D-ribose 1-diphosphate. Its pathway is pyrimidine metabolism; UMP biosynthesis via de novo pathway; UMP from orotate: step 1/2. Functionally, catalyzes the transfer of a ribosyl phosphate group from 5-phosphoribose 1-diphosphate to orotate, leading to the formation of orotidine monophosphate (OMP). In Clostridium botulinum (strain Eklund 17B / Type B), this protein is Orotate phosphoribosyltransferase.